A 497-amino-acid polypeptide reads, in one-letter code: uncharacterized protein (497 aa).

The segment at 474–497 is disordered; it reads DPRNPFSNGKPSGWSDEDVAWLKR. The span at 488–497 shows a compositional bias: acidic residues; it reads SDEDVAWLKR.

This is an uncharacterized protein from Bacillus anthracis.